Consider the following 192-residue polypeptide: Pyridoxine/pyridoxamine 5'-phosphate oxidase (192 aa).

FMN contacts are provided by residues Arg41–Lys46, Phe56–Thr57, Arg62, Lys63, and Gln85. Lys46 is a binding site for substrate. Positions 103, 107, and 111 each coordinate substrate. FMN is bound by residues Gln120 to Ser121 and Trp165. Arg171–His173 contacts substrate. Arg175 serves as a coordination point for FMN.

It belongs to the pyridoxamine 5'-phosphate oxidase family. In terms of assembly, homodimer. The cofactor is FMN.

It carries out the reaction pyridoxamine 5'-phosphate + O2 + H2O = pyridoxal 5'-phosphate + H2O2 + NH4(+). The catalysed reaction is pyridoxine 5'-phosphate + O2 = pyridoxal 5'-phosphate + H2O2. The protein operates within cofactor metabolism; pyridoxal 5'-phosphate salvage; pyridoxal 5'-phosphate from pyridoxamine 5'-phosphate: step 1/1. It functions in the pathway cofactor metabolism; pyridoxal 5'-phosphate salvage; pyridoxal 5'-phosphate from pyridoxine 5'-phosphate: step 1/1. In terms of biological role, catalyzes the oxidation of either pyridoxine 5'-phosphate (PNP) or pyridoxamine 5'-phosphate (PMP) into pyridoxal 5'-phosphate (PLP). This is Pyridoxine/pyridoxamine 5'-phosphate oxidase from Zymomonas mobilis subsp. mobilis (strain ATCC 31821 / ZM4 / CP4).